Reading from the N-terminus, the 726-residue chain is Myb-like protein Z (726 aa).

Disordered stretches follow at residues 15 to 109 (DSND…SLSN), 124 to 149 (ASPS…YHPY), 161 to 239 (HYVS…TKQQ), and 272 to 303 (LIPS…NMRS). The segment covering 18-39 (DNNNNNNNNNNSNNNNNNNNNN) has biased composition (low complexity). A compositionally biased stretch (polar residues) spans 45–80 (SSATSSPTGQDSTIDRPNSPSSSIKFTYPSKNSIVT). A compositionally biased stretch (low complexity) spans 81-108 (SPSSLQLPSPSFSSSSSSSSSSSSSSLS). Over residues 124–147 (ASPSKSSENSPTIHTSSLSPNSYH) the composition is skewed to polar residues. The segment covering 165 to 177 (NNNNNNNNNNNNN) has biased composition (low complexity). The span at 183-209 (SSELYNTSPSISSKTTPNGSSTNNSPF) shows a compositional bias: polar residues. Low complexity predominate over residues 221 to 239 (NNNNNNNNDRNENNTTKQQ). The 60-residue stretch at 329 to 388 (IPIATRKLWSQEECCRLLEMVFQRDPQSVTSKESELRWRSIASTLGRTVTSTRKKYMRLM) folds into the Myb-like domain. Over residues 516–651 (KQIQQQQKQK…NNNYRSSLSP (136 aa)) the composition is skewed to low complexity. The disordered stretch occupies residues 516-726 (KQIQQQQKQK…NNNNYNNYHN (211 aa)). The span at 661–675 (QSPQQKSNNENQQNF) shows a compositional bias: polar residues. Over residues 709 to 726 (NLNNNNNNNNNNYNNYHN) the composition is skewed to low complexity.

In Dictyostelium discoideum (Social amoeba), this protein is Myb-like protein Z (mybZ).